Reading from the N-terminus, the 517-residue chain is Xylosidase/arabinosidase (517 aa).

The active-site Proton acceptor is aspartate 15. The active-site Proton donor is the glutamate 185.

This sequence belongs to the glycosyl hydrolase 43 family.

It carries out the reaction Hydrolysis of (1-&gt;4)-beta-D-xylans, to remove successive D-xylose residues from the non-reducing termini.. The enzyme catalyses Hydrolysis of terminal non-reducing alpha-L-arabinofuranoside residues in alpha-L-arabinosides.. Functionally, has a 1.6-fold higher activity as an arabinosidase than as a beta-xylosidase when tested on the substrates nitrophenyl-beta-D-xylopyranoside and P-nitrophenyl-alpha-L-arabinofuranoside. In Butyrivibrio fibrisolvens, this protein is Xylosidase/arabinosidase (xylB).